Reading from the N-terminus, the 452-residue chain is NADH-ubiquinone oxidoreductase chain 4 (452 aa).

14 helical membrane-spanning segments follow: residues 7–27, 57–77, 95–115, 116–136, 145–165, 186–206, 218–238, 251–271, 278–298, 303–323, 336–356, 360–380, 386–406, and 428–448; these read VLMS…IIAL, MMSF…ILAS, VILL…MFYI, WFEA…YQPE, MIYT…IFIV, MALA…MFTV, PIAG…YGIL, TSSL…LICL, SLIA…ALMS, FQAA…LFVM, LFLM…WFLF, NMAA…TSIL, AFIL…YMYT, and LTLM…PELI.

It belongs to the complex I subunit 4 family.

The protein resides in the mitochondrion membrane. It catalyses the reaction a ubiquinone + NADH + 5 H(+)(in) = a ubiquinol + NAD(+) + 4 H(+)(out). Its function is as follows. Core subunit of the mitochondrial membrane respiratory chain NADH dehydrogenase (Complex I) that is believed to belong to the minimal assembly required for catalysis. Complex I functions in the transfer of electrons from NADH to the respiratory chain. The immediate electron acceptor for the enzyme is believed to be ubiquinone. The sequence is that of NADH-ubiquinone oxidoreductase chain 4 (ND4) from Lumbricus terrestris (Common earthworm).